Consider the following 399-residue polypeptide: Bone morphogenetic protein 8A (399 aa).

Residues 1–19 (MAMRPGPLWLLGLALCALG) form the signal peptide. The propeptide occupies 20-260 (GGHGPRPPHT…ASQSPVRAPR (241 aa)). N155 carries an N-linked (GlcNAc...) asparagine glycan. Residues 257–286 (RAPRAARPLKRRQPKKTNELPHPNKLPGIF) form a disordered region. 3 disulfide bridges follow: C298–C364, C327–C396, and C331–C398. The N-linked (GlcNAc...) asparagine glycan is linked to N340.

It belongs to the TGF-beta family. In terms of assembly, homodimer; disulfide-linked. Expressed in testis. expressed in trophoblast cells of the labyrinthine region of the placenta and in the inner root sheath of hair follicles of early postnatal skin. Expressed predominantly in the neonatal mouse spermatogonia.

It is found in the secreted. Growth factor of the TGF-beta superfamily that plays important role in various biological processes, including spermatogenesis, osteogenesis, steroidogenesis as well as regulation of energy balance. Initiates the canonical BMP signaling cascade by associating with type I receptor BMPR1A and type II receptor BMPR2. Once all three components are bound together in a complex at the cell surface, BMPR2 phosphorylates and activates BMPR1A. In turn, BMPR1A propagates signal by phosphorylating SMAD1/5/8 that travel to the nucleus and act as activators and repressors of transcription of target genes. In addition, activates the SMAD2/3 pathway. This Mus musculus (Mouse) protein is Bone morphogenetic protein 8A (Bmp8a).